The primary structure comprises 309 residues: UPF0282 protein Saci_0277 (309 aa).

This sequence belongs to the UPF0282 family.

The protein is UPF0282 protein Saci_0277 of Sulfolobus acidocaldarius (strain ATCC 33909 / DSM 639 / JCM 8929 / NBRC 15157 / NCIMB 11770).